The primary structure comprises 451 residues: Phosphoglucosamine mutase (451 aa).

Serine 102 functions as the Phosphoserine intermediate in the catalytic mechanism. Residues serine 102, aspartate 243, aspartate 245, and aspartate 247 each coordinate Mg(2+). Serine 102 is subject to Phosphoserine.

The protein belongs to the phosphohexose mutase family. The cofactor is Mg(2+). In terms of processing, activated by phosphorylation.

The enzyme catalyses alpha-D-glucosamine 1-phosphate = D-glucosamine 6-phosphate. In terms of biological role, catalyzes the conversion of glucosamine-6-phosphate to glucosamine-1-phosphate. The chain is Phosphoglucosamine mutase from Brucella anthropi (strain ATCC 49188 / DSM 6882 / CCUG 24695 / JCM 21032 / LMG 3331 / NBRC 15819 / NCTC 12168 / Alc 37) (Ochrobactrum anthropi).